Consider the following 33-residue polypeptide: ECKGFGKSCVPGKNECCSGLTCSNKHKWCKVLL.

3 disulfides stabilise this stretch: Cys-2–Cys-17, Cys-9–Cys-22, and Cys-16–Cys-29. At Leu-33 the chain carries Leucine amide.

This sequence belongs to the neurotoxin 10 (Hwtx-1) family. 14 (Hntx-1) subfamily. In terms of assembly, monomer. As to expression, expressed by the venom gland.

The protein resides in the secreted. Potently and reversibly inhibits some human voltage-gated sodium channels (Nav1.1/SCN1A (IC(50)=72.0 nM), Nav1.2/SCN2A (IC(50)=75.5 nM), Nav1.6/SCN8A (IC(50)=115.0 nM), Nav1.7/SCN9A (IC(50)=52.7-129.5 nM), Nav1.3/SCN3A (IC(50)=306.6 nM)). The hNav1.7/SCN9A channel inhibition occurs without any change in steady-state inactivation- and conductance-voltage relationships. On adult mouse DRG neurons, this toxin is approximately 1000-fold more efficient to inhibit tetrodotoxin (TTX)-sensitive than TTX-resistant sodium currents. In vivo, this toxin exhibits analgesic effects in mice pain models. In Omothymus schioedtei (Malaysian earth tiger tarantula), this protein is Mu-theraphotoxin-Os1a.